The following is a 118-amino-acid chain: Large ribosomal subunit protein bL20 (118 aa).

It belongs to the bacterial ribosomal protein bL20 family.

Its function is as follows. Binds directly to 23S ribosomal RNA and is necessary for the in vitro assembly process of the 50S ribosomal subunit. It is not involved in the protein synthesizing functions of that subunit. The sequence is that of Large ribosomal subunit protein bL20 from Pseudomonas fluorescens (strain ATCC BAA-477 / NRRL B-23932 / Pf-5).